Reading from the N-terminus, the 229-residue chain is Cytidylate kinase (229 aa).

Residue Gly-12 to Thr-20 participates in ATP binding.

Belongs to the cytidylate kinase family. Type 1 subfamily.

It localises to the cytoplasm. The catalysed reaction is CMP + ATP = CDP + ADP. It catalyses the reaction dCMP + ATP = dCDP + ADP. The sequence is that of Cytidylate kinase from Pseudomonas fluorescens (strain SBW25).